The following is a 175-amino-acid chain: 6,7-dimethyl-8-ribityllumazine synthase (175 aa).

Residues F24, 58-60, and 82-84 contribute to the 5-amino-6-(D-ribitylamino)uracil site; these read ALE and AVI. Residue 87 to 88 coordinates (2S)-2-hydroxy-3-oxobutyl phosphate; the sequence is ET. The active-site Proton donor is the H90. N115 serves as a coordination point for 5-amino-6-(D-ribitylamino)uracil. R129 lines the (2S)-2-hydroxy-3-oxobutyl phosphate pocket. Residues 150-175 are disordered; that stretch reads ALEPEEDDEDEDDEDEDFDDEEDDGR. Residues 152-175 are compositionally biased toward acidic residues; sequence EPEEDDEDEDDEDEDFDDEEDDGR.

This sequence belongs to the DMRL synthase family.

It carries out the reaction (2S)-2-hydroxy-3-oxobutyl phosphate + 5-amino-6-(D-ribitylamino)uracil = 6,7-dimethyl-8-(1-D-ribityl)lumazine + phosphate + 2 H2O + H(+). It functions in the pathway cofactor biosynthesis; riboflavin biosynthesis; riboflavin from 2-hydroxy-3-oxobutyl phosphate and 5-amino-6-(D-ribitylamino)uracil: step 1/2. Catalyzes the formation of 6,7-dimethyl-8-ribityllumazine by condensation of 5-amino-6-(D-ribitylamino)uracil with 3,4-dihydroxy-2-butanone 4-phosphate. This is the penultimate step in the biosynthesis of riboflavin. The polypeptide is 6,7-dimethyl-8-ribityllumazine synthase (Bordetella bronchiseptica (strain ATCC BAA-588 / NCTC 13252 / RB50) (Alcaligenes bronchisepticus)).